The sequence spans 156 residues: ATP synthase subunit b (156 aa).

Residues 7–27 (LFAQIIVFFGLVWFTMKFVWP) form a helical membrane-spanning segment.

It belongs to the ATPase B chain family. In terms of assembly, F-type ATPases have 2 components, F(1) - the catalytic core - and F(0) - the membrane proton channel. F(1) has five subunits: alpha(3), beta(3), gamma(1), delta(1), epsilon(1). F(0) has three main subunits: a(1), b(2) and c(10-14). The alpha and beta chains form an alternating ring which encloses part of the gamma chain. F(1) is attached to F(0) by a central stalk formed by the gamma and epsilon chains, while a peripheral stalk is formed by the delta and b chains.

The protein resides in the cell inner membrane. Functionally, f(1)F(0) ATP synthase produces ATP from ADP in the presence of a proton or sodium gradient. F-type ATPases consist of two structural domains, F(1) containing the extramembraneous catalytic core and F(0) containing the membrane proton channel, linked together by a central stalk and a peripheral stalk. During catalysis, ATP synthesis in the catalytic domain of F(1) is coupled via a rotary mechanism of the central stalk subunits to proton translocation. In terms of biological role, component of the F(0) channel, it forms part of the peripheral stalk, linking F(1) to F(0). The protein is ATP synthase subunit b of Neisseria gonorrhoeae (strain NCCP11945).